The primary structure comprises 180 residues: Probable DNA-directed RNA polymerase subunit delta (180 aa).

The HTH HARE-type domain maps to 14 to 81; sequence LSMIEVARAI…GHNVWALRSW (68 aa). The disordered stretch occupies residues 89-180; sequence EEVNHPEDEE…HQDDLDDDDE (92 aa). Over residues 115 to 163 the composition is skewed to acidic residues; the sequence is DSDDDDIIDYDSDDPEDEDLDVDEEDTNEDDYSDDDLDDADDNELDDGI.

It belongs to the RpoE family. In terms of assembly, RNAP is composed of a core of 2 alpha, a beta and a beta' subunits. The core is associated with a delta subunit and one of several sigma factors.

In terms of biological role, participates in both the initiation and recycling phases of transcription. In the presence of the delta subunit, RNAP displays an increased specificity of transcription, a decreased affinity for nucleic acids, and an increased efficiency of RNA synthesis because of enhanced recycling. This Lactobacillus johnsonii (strain CNCM I-12250 / La1 / NCC 533) protein is Probable DNA-directed RNA polymerase subunit delta.